Consider the following 348-residue polypeptide: Phenylalanine--tRNA ligase alpha subunit (348 aa).

Residue glutamate 259 coordinates Mg(2+).

Belongs to the class-II aminoacyl-tRNA synthetase family. Phe-tRNA synthetase alpha subunit type 1 subfamily. As to quaternary structure, tetramer of two alpha and two beta subunits. Mg(2+) serves as cofactor.

The protein localises to the cytoplasm. It carries out the reaction tRNA(Phe) + L-phenylalanine + ATP = L-phenylalanyl-tRNA(Phe) + AMP + diphosphate + H(+). The protein is Phenylalanine--tRNA ligase alpha subunit of Ligilactobacillus salivarius (strain UCC118) (Lactobacillus salivarius).